The chain runs to 429 residues: Esterase/beta-lactamase LipL (429 aa).

Residue S88 is the Acyl-ester intermediate of the active site.

The protein belongs to the beta-lactamase family.

It localises to the secreted. The protein resides in the cell wall. The protein localises to the cell membrane. It catalyses the reaction a fatty acid ester + H2O = an aliphatic alcohol + a fatty acid + H(+). The catalysed reaction is an acetyl ester + H2O = an aliphatic alcohol + acetate + H(+). It carries out the reaction a butanoate ester + H2O = an aliphatic alcohol + butanoate + H(+). The enzyme catalyses an octanoate ester + H2O = an aliphatic alcohol + octanoate + H(+). It catalyses the reaction decanoate ester + H2O = decanoate + an aliphatic alcohol + H(+). The catalysed reaction is a dodecanoate ester + H2O = an aliphatic alcohol + dodecanoate + H(+). It carries out the reaction a tetradecanoate ester + H2O = an aliphatic alcohol + tetradecanoate + H(+). The enzyme catalyses hexadecanoate ester + H2O = an aliphatic alcohol + hexadecanoate + H(+). It catalyses the reaction octadecanoate ester + H2O = an aliphatic alcohol + octadecanoate + H(+). The catalysed reaction is a hexanoate ester + H2O = an aliphatic alcohol + hexanoate + H(+). It carries out the reaction a beta-lactam + H2O = a substituted beta-amino acid. With respect to regulation, esterase and beta-lactamase activities are inhibited by the active site residue modifiers phenylmethanesulfonylflouride (PMSF) and diethylpyrocarbonate (DEPC). Its function is as follows. Shows both esterase and beta-lactamase activities, with a much higher activity against phenyl esters than against beta-lactams. Shows esterase activity against both long-chain and short-chain p-nitrophenol (pNP) esters, with a preference for shorter chain esters. Hydrolyzes substrates containing beta-lactam ring such as nitrocefin and ampicillin. Functions as an immunogen that activates both humoral and cell-mediated responses. This Mycobacterium tuberculosis (strain ATCC 25618 / H37Rv) protein is Esterase/beta-lactamase LipL.